The following is a 158-amino-acid chain: Interleukin-36 alpha (158 aa).

Positions 1–5 (MEKAL) are excised as a propeptide. Tyrosine 96 carries the 3'-nitrotyrosine modification.

It belongs to the IL-1 family. As to quaternary structure, interacts with TMED10; the interaction mediates the translocation from the cytoplasm into the ERGIC (endoplasmic reticulum-Golgi intermediate compartment) and thereby secretion. In terms of processing, N-terminal truncation leads to a dramatic enhancement of its activity (&gt;1000-fold). As to expression, expressed in immune system and fetal brain, but not in other tissues tested or in multiple hematopoietic cell lines. Predominantly expressed in skin keratinocytes but not in fibroblasts, endothelial cells or melanocytes. Increased in lesional psoriasis skin.

It is found in the cytoplasm. Its subcellular location is the secreted. Functionally, cytokine that binds to and signals through the IL1RL2/IL-36R receptor which in turn activates NF-kappa-B and MAPK signaling pathways in target cells linked to a pro-inflammatory response. Part of the IL-36 signaling system that is thought to be present in epithelial barriers and to take part in local inflammatory response; similar to the IL-1 system with which it shares the coreceptor IL1RAP. Seems to be involved in skin inflammatory response by acting on keratinocytes, dendritic cells and indirectly on T-cells to drive tissue infiltration, cell maturation and cell proliferation. In cultured keratinocytes induces the expression of macrophage, T-cell, and neutrophil chemokines, such as CCL3, CCL4, CCL5, CCL2, CCL17, CCL22, CL20, CCL5, CCL2, CCL17, CCL22, CXCL8, CCL20 and CXCL1, and the production of pro-inflammatory cytokines such as TNF-alpha, IL-8 and IL-6. In cultured monocytes up-regulates expression of IL-1A, IL-1B and IL-6. In myeloid dendritic cells involved in cell maturation by up-regulating surface expression of CD83, CD86 and HLA-DR. In monocyte-derived dendritic cells facilitates dendritic cell maturation and drives T-cell proliferation. May play a role in pro-inflammatory effects in the lung. In Homo sapiens (Human), this protein is Interleukin-36 alpha.